The sequence spans 37 residues: Large ribosomal subunit protein bL36c (37 aa).

This sequence belongs to the bacterial ribosomal protein bL36 family.

Its subcellular location is the plastid. It is found in the chloroplast. This Piper cenocladum (Ant piper) protein is Large ribosomal subunit protein bL36c.